Here is a 605-residue protein sequence, read N- to C-terminus: Replication protein E1 (605 aa).

The short motif at 76-78 (KRK) is the Nuclear localization signal element. Ser-81 and Ser-89 each carry phosphoserine; by host. Residues 88–97 (LSPRLESISL) carry the Nuclear export signal motif. The tract at residues 145 to 308 (HLGTVDIHYT…TIVGHQSTEA (164 aa)) is DNA-binding region. The region spanning 407 to 557 (VNVIMFLAAL…FPMKPDNTPE (151 aa)) is the SF3 helicase domain. 433 to 440 (GPPNTGKS) provides a ligand contact to ATP. Lys-514 participates in a covalent cross-link: Glycyl lysine isopeptide (Lys-Gly) (interchain with G-Cter in SUMO). The segment at 580–605 (DQEDEGENGESQQAFQCSARSANEHL) is disordered. Positions 588–605 (GESQQAFQCSARSANEHL) are enriched in polar residues.

This sequence belongs to the papillomaviridae E1 protein family. As to quaternary structure, can form hexamers. Interacts with E2 protein; this interaction increases E1 DNA binding specificity. Interacts with host DNA polymerase subunit POLA2. Interacts with host single stranded DNA-binding protein RPA1. Interacts with host TOP1; this interaction stimulates the enzymatic activity of TOP1. Post-translationally, phosphorylated. In terms of processing, sumoylated.

It localises to the host nucleus. The enzyme catalyses Couples ATP hydrolysis with the unwinding of duplex DNA by translocating in the 3'-5' direction.. It catalyses the reaction ATP + H2O = ADP + phosphate + H(+). Its function is as follows. ATP-dependent DNA 3'-5' helicase required for initiation of viral DNA replication. It forms a complex with the viral E2 protein. The E1-E2 complex binds to the replication origin which contains binding sites for both proteins. During the initial step, a dimer of E1 interacts with a dimer of protein E2 leading to a complex that binds the viral origin of replication with high specificity. Then, a second dimer of E1 displaces the E2 dimer in an ATP-dependent manner to form the E1 tetramer. Following this, two E1 monomers are added to each half of the site, which results in the formation of two E1 trimers on the viral ori. Subsequently, two hexamers will be created. The double hexamer acts as a bi-directional helicase machinery and unwinds the viral DNA and then recruits the host DNA polymerase to start replication. This is Replication protein E1 from Homo sapiens (Human).